Here is a 413-residue protein sequence, read N- to C-terminus: Mitochondrial carrier protein MTM1 (413 aa).

Solcar repeat units lie at residues I59–R193, M205–R305, and G318–V406. The next 6 membrane-spanning stretches (helical) occupy residues V65 to V85, N170 to F190, A204 to Y226, Q284 to K304, L316 to A336, and L378 to F399.

Belongs to the mitochondrial carrier (TC 2.A.29) family. Ubiquitous.

The protein resides in the mitochondrion inner membrane. In terms of biological role, involved in the mitochondrial activation of MSD1 by specifically facilitating insertion of the essential manganese cofactor. Has the ability to activate iron regulon in an iron-dependent manner. The sequence is that of Mitochondrial carrier protein MTM1 (MTM1) from Arabidopsis thaliana (Mouse-ear cress).